A 152-amino-acid polypeptide reads, in one-letter code: SsrA-binding protein (152 aa).

Belongs to the SmpB family.

Its subcellular location is the cytoplasm. Required for rescue of stalled ribosomes mediated by trans-translation. Binds to transfer-messenger RNA (tmRNA), required for stable association of tmRNA with ribosomes. tmRNA and SmpB together mimic tRNA shape, replacing the anticodon stem-loop with SmpB. tmRNA is encoded by the ssrA gene; the 2 termini fold to resemble tRNA(Ala) and it encodes a 'tag peptide', a short internal open reading frame. During trans-translation Ala-aminoacylated tmRNA acts like a tRNA, entering the A-site of stalled ribosomes, displacing the stalled mRNA. The ribosome then switches to translate the ORF on the tmRNA; the nascent peptide is terminated with the 'tag peptide' encoded by the tmRNA and targeted for degradation. The ribosome is freed to recommence translation, which seems to be the essential function of trans-translation. The chain is SsrA-binding protein from Rickettsia montanensis.